The primary structure comprises 877 residues: Alanine--tRNA ligase (877 aa).

Positions 564, 568, 666, and 670 each coordinate Zn(2+).

This sequence belongs to the class-II aminoacyl-tRNA synthetase family. The cofactor is Zn(2+).

It localises to the cytoplasm. The enzyme catalyses tRNA(Ala) + L-alanine + ATP = L-alanyl-tRNA(Ala) + AMP + diphosphate. Its function is as follows. Catalyzes the attachment of alanine to tRNA(Ala) in a two-step reaction: alanine is first activated by ATP to form Ala-AMP and then transferred to the acceptor end of tRNA(Ala). Also edits incorrectly charged Ser-tRNA(Ala) and Gly-tRNA(Ala) via its editing domain. The polypeptide is Alanine--tRNA ligase (Pelotomaculum thermopropionicum (strain DSM 13744 / JCM 10971 / SI)).